A 319-amino-acid polypeptide reads, in one-letter code: Ribosomal RNA small subunit methyltransferase H (319 aa).

S-adenosyl-L-methionine contacts are provided by residues Gly37–Tyr39, Asp57, Phe96, Asp105, and Gln112. Over residues Arg292–Pro302 the composition is skewed to basic and acidic residues. The disordered stretch occupies residues Arg292–Ala319.

This sequence belongs to the methyltransferase superfamily. RsmH family.

It localises to the cytoplasm. The catalysed reaction is cytidine(1402) in 16S rRNA + S-adenosyl-L-methionine = N(4)-methylcytidine(1402) in 16S rRNA + S-adenosyl-L-homocysteine + H(+). In terms of biological role, specifically methylates the N4 position of cytidine in position 1402 (C1402) of 16S rRNA. In Syntrophobacter fumaroxidans (strain DSM 10017 / MPOB), this protein is Ribosomal RNA small subunit methyltransferase H.